An 835-amino-acid chain; its full sequence is Cap-specific mRNA (nucleoside-2'-O-)-methyltransferase 1 (835 aa).

Residues 1–66 (MKRRNDSECT…TEGKQRSSDS (66 aa)) are disordered. The short motif at 2–19 (KRRNDSECTAPLKKQKKR) is the Bipartite nuclear localization signal element. Phosphoserine is present on residues Ser28, Ser31, Ser53, Ser66, and Ser91. A compositionally biased stretch (basic and acidic residues) spans 57–66 (TEGKQRSSDS). Residues 87–133 (YNSVSQKLMAKMGFKEGEGLGKYSQGRKDIVEASNQKGRRGLGLTLQ) enclose the G-patch domain. An N6-acetyllysine modification is found at Lys108. Residues 203–207 (KSVFD) and Arg218 contribute to the substrate site. The region spanning 231–450 (FFLNRAAMKM…ERYVVCKGLK (220 aa)) is the RrmJ-type SAM-dependent 2'-O-MTase domain. Asn234 is a binding site for S-adenosyl-L-methionine. The active site involves Lys239. S-adenosyl-L-methionine contacts are provided by residues 277–283 (CAGPGGF) and 335–336 (DI). The active site involves Asp364. 374 to 376 (NLQ) serves as a coordination point for substrate. The active-site Proton acceptor is the Lys404. Asn439 provides a ligand contact to substrate. The interaction with POLR2A stretch occupies residues 727 to 835 (SSGTPKLSYT…VLSFIQTHSA (109 aa)). The WW domain maps to 752–786 (RTVNEPWTMGFSKSFKRKFFYNKKTKNSTFDLPAD).

In terms of assembly, interacts with POLR2A (via C-terminus).

The protein resides in the nucleus. The enzyme catalyses a 5'-end (N(7)-methyl 5'-triphosphoguanosine)-ribonucleoside in mRNA + S-adenosyl-L-methionine = a 5'-end (N(7)-methyl 5'-triphosphoguanosine)-(2'-O-methyl-ribonucleoside) in mRNA + S-adenosyl-L-homocysteine + H(+). Its function is as follows. S-adenosyl-L-methionine-dependent methyltransferase that mediates mRNA cap1 2'-O-ribose methylation to the 5'-cap structure of mRNAs. Methylates the ribose of the first nucleotide of a m(7)GpppG-capped mRNA and small nuclear RNA (snRNA) to produce m(7)GpppRm (cap1). Displays a preference for cap0 transcripts. Cap1 modification is linked to higher levels of translation. May be involved in the interferon response pathway. The protein is Cap-specific mRNA (nucleoside-2'-O-)-methyltransferase 1 (CMTR1) of Bos taurus (Bovine).